A 306-amino-acid chain; its full sequence is Acetyl-coenzyme A carboxylase carboxyl transferase subunit beta (306 aa).

The CoA carboxyltransferase N-terminal domain occupies 25 to 294 (VWTKCDSCGQ…PSPDAPREAV (270 aa)). Residues Cys29, Cys32, Cys48, and Cys51 each coordinate Zn(2+). The C4-type zinc finger occupies 29 to 51 (CDSCGQVLYRAELERNLEVCPKC). The segment at 286–306 (SPDAPREAVVVPPVPDQDHEA) is disordered.

The protein belongs to the AccD/PCCB family. Acetyl-CoA carboxylase is a heterohexamer composed of biotin carboxyl carrier protein (AccB), biotin carboxylase (AccC) and two subunits each of ACCase subunit alpha (AccA) and ACCase subunit beta (AccD). Zn(2+) is required as a cofactor.

Its subcellular location is the cytoplasm. It carries out the reaction N(6)-carboxybiotinyl-L-lysyl-[protein] + acetyl-CoA = N(6)-biotinyl-L-lysyl-[protein] + malonyl-CoA. It participates in lipid metabolism; malonyl-CoA biosynthesis; malonyl-CoA from acetyl-CoA: step 1/1. Component of the acetyl coenzyme A carboxylase (ACC) complex. Biotin carboxylase (BC) catalyzes the carboxylation of biotin on its carrier protein (BCCP) and then the CO(2) group is transferred by the transcarboxylase to acetyl-CoA to form malonyl-CoA. The chain is Acetyl-coenzyme A carboxylase carboxyl transferase subunit beta from Cronobacter sakazakii (strain ATCC BAA-894) (Enterobacter sakazakii).